We begin with the raw amino-acid sequence, 191 residues long: Pentapeptide repeat protein MfpA (191 aa).

A Pentapeptide repeat domain is found at 115–154 (CRLREVSLVGADLRKAVLRRADLTGSRVQDARLEEADLRG).

The protein belongs to the pentapeptide repeat protein family. In terms of assembly, homodimer. Probably interacts with DNA gyrase.

Its function is as follows. When present on multicopy plasmids confers increased resistance to fluoroquinolone antibiotics such as ciprofloxacin and sparfloxacin but not the quinolone nalidixic acid. Forms a structure that exhibits size, shape and electrostatic similarity to B-form DNA; it may bind to DNA gyrase which is postulated to protect it from fluoroquinolones. This is Pentapeptide repeat protein MfpA from Mycolicibacterium smegmatis (strain ATCC 700084 / mc(2)155) (Mycobacterium smegmatis).